Here is a 367-residue protein sequence, read N- to C-terminus: Glutamate 5-kinase (367 aa).

Residue lysine 9 coordinates ATP. The substrate site is built by serine 49, aspartate 136, and asparagine 148. ATP is bound by residues 168–169 and 210–216; these read TD and TGGMKSK. The PUA domain maps to 276-350; that stretch reads SGQIEIDAGA…GMQSQQIQAR (75 aa).

It belongs to the glutamate 5-kinase family.

It is found in the cytoplasm. The enzyme catalyses L-glutamate + ATP = L-glutamyl 5-phosphate + ADP. It functions in the pathway amino-acid biosynthesis; L-proline biosynthesis; L-glutamate 5-semialdehyde from L-glutamate: step 1/2. Its function is as follows. Catalyzes the transfer of a phosphate group to glutamate to form L-glutamate 5-phosphate. The chain is Glutamate 5-kinase from Bacillus anthracis.